We begin with the raw amino-acid sequence, 259 residues long: tRNA (guanine-N(7)-)-methyltransferase (259 aa).

The tract at residues Met1–Gly73 is disordered. The S-adenosyl-L-methionine site is built by Glu91, Glu116, Asn143, and Asp166. The active site involves Asp166. Residues Lys170, Asp202, and Thr238 to Glu241 contribute to the substrate site.

The protein belongs to the class I-like SAM-binding methyltransferase superfamily. TrmB family.

It carries out the reaction guanosine(46) in tRNA + S-adenosyl-L-methionine = N(7)-methylguanosine(46) in tRNA + S-adenosyl-L-homocysteine. It functions in the pathway tRNA modification; N(7)-methylguanine-tRNA biosynthesis. In terms of biological role, catalyzes the formation of N(7)-methylguanine at position 46 (m7G46) in tRNA. This chain is tRNA (guanine-N(7)-)-methyltransferase, found in Mycolicibacterium paratuberculosis (strain ATCC BAA-968 / K-10) (Mycobacterium paratuberculosis).